The sequence spans 316 residues: Pantothenate kinase (316 aa).

Residue 95-102 (GSVAVGKS) participates in ATP binding.

Belongs to the prokaryotic pantothenate kinase family.

It localises to the cytoplasm. It catalyses the reaction (R)-pantothenate + ATP = (R)-4'-phosphopantothenate + ADP + H(+). It functions in the pathway cofactor biosynthesis; coenzyme A biosynthesis; CoA from (R)-pantothenate: step 1/5. The polypeptide is Pantothenate kinase (Salmonella gallinarum (strain 287/91 / NCTC 13346)).